Reading from the N-terminus, the 648-residue chain is DNA gyrase subunit B (648 aa).

The region spanning 432–546 is the Toprim domain; sequence RELFIVEGNS…YGFVYLAQPP (115 aa). Positions 438, 511, and 513 each coordinate Mg(2+).

This sequence belongs to the type II topoisomerase GyrB family. In terms of assembly, heterotetramer, composed of two GyrA and two GyrB chains. In the heterotetramer, GyrA contains the active site tyrosine that forms a transient covalent intermediate with DNA, while GyrB binds cofactors and catalyzes ATP hydrolysis. Mg(2+) is required as a cofactor. It depends on Mn(2+) as a cofactor. Ca(2+) serves as cofactor.

The protein localises to the cytoplasm. The enzyme catalyses ATP-dependent breakage, passage and rejoining of double-stranded DNA.. In terms of biological role, a type II topoisomerase that negatively supercoils closed circular double-stranded (ds) DNA in an ATP-dependent manner to modulate DNA topology and maintain chromosomes in an underwound state. Negative supercoiling favors strand separation, and DNA replication, transcription, recombination and repair, all of which involve strand separation. Also able to catalyze the interconversion of other topological isomers of dsDNA rings, including catenanes and knotted rings. Type II topoisomerases break and join 2 DNA strands simultaneously in an ATP-dependent manner. The sequence is that of DNA gyrase subunit B from Metamycoplasma hominis (strain ATCC 23114 / DSM 25592 / NBRC 14850 / NCTC 10111 / PG21) (Mycoplasma hominis).